Reading from the N-terminus, the 24-residue chain is FLPAIAGVAAKFLPKIFCAISKKC.

Cysteine 18 and cysteine 24 form a disulfide bridge.

As to expression, expressed by the skin glands.

Its subcellular location is the secreted. Its function is as follows. Antibacterial activity against Gram-positive bacterium S.aureus and Gram-negative bacterium E.coli. Has activity against C.albicans. The sequence is that of Brevinin-1Bd from Lithobates berlandieri (Rio Grande leopard frog).